A 757-amino-acid chain; its full sequence is Inhibitor of nuclear factor kappa-B kinase subunit beta (757 aa).

Positions 15-300 constitute a Protein kinase domain; it reads WEMKERLGTG…DPQYGPNGCF (286 aa). Residues 21–29 and Lys-44 contribute to the ATP site; that span reads LGTGGFGNV. Asp-145 serves as the catalytic Proton acceptor. Residue Lys-163 forms a Glycyl lysine isopeptide (Lys-Gly) (interchain with G-Cter in ubiquitin) linkage. Ser-177 carries the post-translational modification Phosphoserine; by TBK1 and PKC/PRKCZ. Cys-179 bears the S-nitrosocysteine mark. At Ser-181 the chain carries Phosphoserine; by TBK1, PKC/PRKCZ and PDPK1. Pro-191 is modified (hydroxyproline). Residues 458–479 form a leucine-zipper region; it reads LLRNNSCLSKMKNAMASTAQQL. The residue at position 670 (Ser-670) is a Phosphoserine; by autocatalysis. Residue Ser-672 is modified to Phosphoserine. Residues Ser-675, Ser-682, Ser-689, Ser-692, Ser-697, Ser-705, Ser-733, and Ser-740 each carry the phosphoserine; by autocatalysis modification. Positions 682 to 703 are disordered; it reads SHPGHLMSQPSSACDSLPDSDK. The tract at residues 737 to 742 is NEMO-binding; it reads LDWSWL.

Belongs to the protein kinase superfamily. Ser/Thr protein kinase family. I-kappa-B kinase subfamily. In terms of assembly, component of the I-kappa-B-kinase (IKK) core complex consisting of CHUK, IKBKB and IKBKG; probably four alpha/CHUK-beta/IKBKB dimers are associated with four gamma/IKBKG subunits. The IKK core complex seems to associate with regulatory or adapter proteins to form a IKK-signalosome holo-complex. The IKK complex associates with TERF2IP/RAP1, leading to promote IKK-mediated phosphorylation of RELA/p65. Part of a complex composed of NCOA2, NCOA3, CHUK/IKKA, IKBKB, IKBKG and CREBBP. Part of a 70-90 kDa complex at least consisting of CHUK/IKKA, IKBKB, NFKBIA, RELA, ELP1 and MAP3K14. Found in a membrane raft complex, at least composed of BCL10, CARD11, DPP4 and IKBKB. Interacts with SQSTM1 through PRKCZ or PRKCI. Forms an NGF-induced complex with IKBKB, PRKCI and TRAF6. May interact with MAVS/IPS1. Interacts with NALP2. Interacts with TICAM1. Interacts with FAF1; the interaction disrupts the IKK complex formation. Interacts with ATM. Part of a ternary complex consisting of TANK, IKBKB and IKBKG. Interacts with NIBP; the interaction is direct. Interacts with ARRB1 and ARRB2. Interacts with TRIM21. Interacts with NLRC5; prevents IKBKB phosphorylation and kinase activity. Interacts with PDPK1. Interacts with EIF2AK2/PKR. The phosphorylated form interacts with PPM1A and PPM1B. Interacts with ZNF268 isoform 2; the interaction is further increased in a TNF-alpha-dependent manner. Interacts with IKBKE. Interacts with ZC3H12A. Interacts with AKAP13. Interacts with LRRC14; disrupts IKBKB-IKBKG interaction preventing I-kappa-B-kinase (IKK) core complex formation and leading to a decrease of IKBKB phosphorylation and NF-kappaB activation. Interacts with SASH1. Interacts with ARFIP2. Interacts with FKBP5. In terms of processing, upon cytokine stimulation, phosphorylated on Ser-177 and Ser-181 by MEKK1 and/or MAP3K14/NIK as well as TBK1 and PRKCZ; which enhances activity. Phosphorylated by MAP3K7/TAK1 in response to NOD1 and NOD2 signaling, promoting activation and phosphorylation of NF-kappa-B inhibitors, leading to NF-kappa-B activation. Once activated, autophosphorylates on the C-terminal serine cluster; which decreases activity and prevents prolonged activation of the inflammatory response. Phosphorylated by the IKK-related kinases TBK1 and IKBKE, which is associated with reduced CHUK/IKKA and IKBKB activity and NF-kappa-B-dependent gene transcription. Dephosphorylated at Ser-177 and Ser-181 by PPM1A and PPM1B. Ubiquitinated. Monoubiquitination involves TRIM21 that leads to inhibition of Tax-induced NF-kappa-B signaling. 'Ser-163' may not serve as a monoubiquitination site. Ubiquitination on 'Ser-163' may modulate phosphorylation on C-terminal serine residues. Post-translationally, hydroxylated by PHD1/EGLN2, loss of hydroxylation under hypoxic conditions results in activation of NF-kappa-B.

It is found in the cytoplasm. It localises to the nucleus. The protein resides in the membrane raft. The enzyme catalyses L-seryl-[I-kappa-B protein] + ATP = O-phospho-L-seryl-[I-kappa-B protein] + ADP + H(+). The catalysed reaction is L-seryl-[protein] + ATP = O-phospho-L-seryl-[protein] + ADP + H(+). It catalyses the reaction L-threonyl-[protein] + ATP = O-phospho-L-threonyl-[protein] + ADP + H(+). Serine kinase that plays an essential role in the NF-kappa-B signaling pathway which is activated by multiple stimuli such as inflammatory cytokines, bacterial or viral products, DNA damages or other cellular stresses. Acts as a part of the canonical IKK complex in the conventional pathway of NF-kappa-B activation. Phosphorylates inhibitors of NF-kappa-B on 2 critical serine residues. These modifications allow polyubiquitination of the inhibitors and subsequent degradation by the proteasome. In turn, free NF-kappa-B is translocated into the nucleus and activates the transcription of hundreds of genes involved in immune response, growth control, or protection against apoptosis. In addition to the NF-kappa-B inhibitors, phosphorylates several other components of the signaling pathway including NEMO/IKBKG, NF-kappa-B subunits RELA and NFKB1, as well as IKK-related kinases TBK1 and IKBKE. IKK-related kinase phosphorylations may prevent the overproduction of inflammatory mediators since they exert a negative regulation on canonical IKKs. Phosphorylates FOXO3, mediating the TNF-dependent inactivation of this pro-apoptotic transcription factor. Also phosphorylates other substrates including NAA10, NCOA3, BCL10 and IRS1. Phosphorylates RIPK1 at 'Ser-25' which represses its kinase activity and consequently prevents TNF-mediated RIPK1-dependent cell death. Phosphorylates the C-terminus of IRF5, stimulating IRF5 homodimerization and translocation into the nucleus. The protein is Inhibitor of nuclear factor kappa-B kinase subunit beta (Ikbkb) of Rattus norvegicus (Rat).